Consider the following 445-residue polypeptide: Phosphoglucosamine mutase (445 aa).

S102 acts as the Phosphoserine intermediate in catalysis. Residues S102, D241, D243, and D245 each coordinate Mg(2+). Residue S102 is modified to Phosphoserine.

Belongs to the phosphohexose mutase family. Requires Mg(2+) as cofactor. Post-translationally, activated by phosphorylation.

It catalyses the reaction alpha-D-glucosamine 1-phosphate = D-glucosamine 6-phosphate. Its function is as follows. Catalyzes the conversion of glucosamine-6-phosphate to glucosamine-1-phosphate. The protein is Phosphoglucosamine mutase of Salmonella dublin (strain CT_02021853).